A 177-amino-acid chain; its full sequence is Large ribosomal subunit protein uL6 (177 aa).

The protein belongs to the universal ribosomal protein uL6 family. Part of the 50S ribosomal subunit.

In terms of biological role, this protein binds to the 23S rRNA, and is important in its secondary structure. It is located near the subunit interface in the base of the L7/L12 stalk, and near the tRNA binding site of the peptidyltransferase center. This Photobacterium profundum (strain SS9) protein is Large ribosomal subunit protein uL6.